A 564-amino-acid chain; its full sequence is Asparagine synthetase domain-containing protein CG17486 (564 aa).

The active-site Nucleophile is the Cys-2. The region spanning 2-180 is the Glutamine amidotransferase type-2 domain; the sequence is CGIFCSVVNN…PLGLFRVKLN (179 aa). The region spanning 280-541 is the Asparagine synthetase domain; the sequence is PFCRLCMQKL…GLRDVVFLKK (262 aa).

The sequence is that of Asparagine synthetase domain-containing protein CG17486 from Drosophila melanogaster (Fruit fly).